Here is a 250-residue protein sequence, read N- to C-terminus: Ribosomal RNA small subunit methyltransferase J (250 aa).

Residues 101–102 (RD), 117–118 (ER), 153–154 (SS), and Asp171 each bind S-adenosyl-L-methionine.

The protein belongs to the methyltransferase superfamily. RsmJ family.

The protein localises to the cytoplasm. It catalyses the reaction guanosine(1516) in 16S rRNA + S-adenosyl-L-methionine = N(2)-methylguanosine(1516) in 16S rRNA + S-adenosyl-L-homocysteine + H(+). Specifically methylates the guanosine in position 1516 of 16S rRNA. The polypeptide is Ribosomal RNA small subunit methyltransferase J (Escherichia coli O81 (strain ED1a)).